We begin with the raw amino-acid sequence, 629 residues long: (-)-alpha-pinene synthase, chloroplastic (629 aa).

The N-terminal 48 residues, 1-48 (MSPVSVISLPSDLCLPTSFIDRSGRELIPLHITIPNVAMRRQGKLMTR), are a transit peptide targeting the chloroplast. Residues Asp380, Asp384, and Asp532 each contribute to the Mg(2+) site. Residues 380–384 (DDMYD) carry the DDXXD motif motif. Position 540 (Ser540) interacts with K(+).

It belongs to the terpene synthase family. Tpsd subfamily. It depends on Mg(2+) as a cofactor. Mn(2+) serves as cofactor. K(+) is required as a cofactor.

The protein localises to the plastid. It is found in the chloroplast. The catalysed reaction is (2E)-geranyl diphosphate = (1S,5S)-alpha-pinene + diphosphate. It participates in terpene metabolism; oleoresin biosynthesis. Involved in defensive oleoresin formation in conifers in response to insect attack or other injury. Involved in monoterpene (C10) olefins biosynthesis. Produces mainly (-)-alpha-pinene (79%) and lesser amounts of (-)-beta-pinene (4.2%), nearly racemic mixtures of camphene (2.8% (+)/2.2% (-)) and limonene (2.4% (+)/3.7% (-)), as well as small amounts of (+)-alpha-pinene (3.3%) and (+)-beta-pinene (2.4%). The chain is (-)-alpha-pinene synthase, chloroplastic (PT1) from Pinus taeda (Loblolly pine).